A 580-amino-acid chain; its full sequence is Serine/threonine-protein kinase PINK1, mitochondrial (580 aa).

The transit peptide at 1 to 77 (MAVRQALGRG…RFFRQSVAGL (77 aa)) directs the protein to the mitochondrion. Residues 78-93 (AARIQRQFMVRARGGA) are Mitochondrial intermembrane-facing. The chain crosses the membrane as a helical span at residues 94-110 (GPCGRAVFLAFGLGLGL). A required for outer membrane localization region spans residues 111 to 117 (IEEKQAE). Residues 111–580 (IEEKQAEGRR…LLLSSWRAAP (470 aa)) are Cytoplasmic-facing. Residues 156–510 (YLIGQAIGKG…LAANVLHLSL (355 aa)) enclose the Protein kinase domain. Residues 162–170 (IGKGCNAAV) and lysine 186 contribute to the ATP site. Serine 227 is subject to Phosphoserine; by autocatalysis. Aspartate 361 serves as the catalytic Proton acceptor. The residue at position 401 (serine 401) is a Phosphoserine; by autocatalysis.

Belongs to the protein kinase superfamily. Ser/Thr protein kinase family. As to quaternary structure, upon mitochondrial depolarization, it forms a supercomplex with TOM and TIM23 complexes. PINK1-TOM-TIM23 supercomplex formation requires PINK1 interaction with TOMM20 and TOMM70 and is critical for PINK1 stabilization at the outer mitochondrial membrane, kinase activation and downstream mitophagy. Upon mitochondrial depolarization, interacts with TIMM23; the interaction is required for PINK1 accumulation at the outer mitochondrial membrane, kinase activation by autophosphorylation and PRKN recruitement to mitochondria. Interacts with PRKN. Interacts with FBXO7. Forms a complex with PRKN and PARK7. Interacts with NENF. Mg(2+) serves as cofactor. Post-translationally, proteolytically cleaved. In healthy cells, the precursor is continuously imported into the inner mitochondrial membrane (IMM), where it is proteolytically cleaved by mitochondrial-processing peptidase (MPP) and then undergoes further proteolytic cleavage by PARL or AFG3L2 to give rise to the 52 kDa short form. The 52 kDa short form is then released into the cytosol where it rapidly undergoes proteasome-dependent degradation. In unhealthy cells, when cellular stress conditions lead to the loss of mitochondrial membrane potential, mitochondrial import is impaired leading to the precursor accumulating on the outer mitochondrial membrane (OMM). If accumulation at the OMM fails and it is imported into the depolarized mitochondria, it undergoes cleavage by the IMM protease OMA1, promoting its subsequent degradation by the proteasome. Autophosphorylated. Loss of mitochondrial membrane potential results in the precursor accumulating on the outer mitochondrial membrane (OMM) where it is activated by autophosphorylation. Autophosphorylation at Ser-227 and Ser-401 is essential for selective recruitment of PRKN to depolarized mitochondria, via PINK1-dependent phosphorylation of ubiquitin and PRKN. In terms of tissue distribution, high levels expressed in testis, lower levels in brain, heart, lung, liver and kidney.

The protein localises to the mitochondrion outer membrane. It is found in the mitochondrion inner membrane. It localises to the cytoplasm. The protein resides in the cytosol. The catalysed reaction is L-seryl-[protein] + ATP = O-phospho-L-seryl-[protein] + ADP + H(+). It carries out the reaction L-threonyl-[protein] + ATP = O-phospho-L-threonyl-[protein] + ADP + H(+). Functionally, serine/threonine-protein kinase which acts as a sensor of mitochondrial damage and protects against mitochondrial dysfunction during cellular stress. It phosphorylates mitochondrial proteins to coordinate mitochondrial quality control mechanisms that remove and replace dysfunctional mitochondrial components. Depending on the severity of mitochondrial damage, activity ranges from preventing apoptosis and stimulating mitochondrial biogenesis to eliminating severely damaged mitochondria via PINK1-PRKN-dependent mitophagy. When cellular stress results in irreversible mitochondrial damage, PINK1 accumulates at the outer mitochondrial membrane (OMM) where it phosphorylates pre-existing polyubiquitin chains at 'Ser-65', recruits PRKN from the cytosol to the OMM and activates PRKN by phosphorylation at 'Ser-65'. Activated PRKN then ubiquinates VDAC1 and other OMM proteins to initiate mitophagy. The PINK1-PRKN pathway also promotes fission of damaged mitochondria by phosphorylating and thus promoting the PRKN-dependent degradation of mitochondrial proteins involved in fission such as MFN2. This prevents the refusion of unhealthy mitochondria with the mitochondrial network or initiates mitochondrial fragmentation facilitating their later engulfment by autophagosomes. Also promotes mitochondrial fission independently of PRKN and ATG7-mediated mitophagy, via the phosphorylation and activation of DNM1L. Regulates motility of damaged mitochondria by promoting the ubiquitination and subsequent degradation of MIRO1 and MIRO2; in motor neurons, this likely inhibits mitochondrial intracellular anterograde transport along the axons which probably increases the chance of the mitochondria undergoing mitophagy in the soma. Required for ubiquinone reduction by mitochondrial complex I by mediating phosphorylation of complex I subunit NDUFA10. Phosphorylates LETM1, positively regulating its mitochondrial calcium transport activity. This is Serine/threonine-protein kinase PINK1, mitochondrial (Pink1) from Mus musculus (Mouse).